Here is a 500-residue protein sequence, read N- to C-terminus: 4-aminobutyrate aminotransferase, mitochondrial (500 aa).

A mitochondrion-targeting transit peptide spans 1 to 28 (MASMLLAQRLACSFQHSYRLLVPGSRHI). [2Fe-2S] cluster is bound at residue cysteine 163. 164 to 165 (GS) is a pyridoxal 5'-phosphate binding site. Cysteine 166 serves as a coordination point for [2Fe-2S] cluster. Position 220 (arginine 220) interacts with substrate. At lysine 231 the chain carries N6-succinyllysine. The residue at position 252 (lysine 252) is an N6-acetyllysine; alternate. N6-succinyllysine; alternate is present on lysine 252. An N6-acetyllysine mark is found at lysine 279 and lysine 318. The residue at position 357 (lysine 357) is an N6-(pyridoxal phosphate)lysine. Threonine 381 lines the pyridoxal 5'-phosphate pocket. Lysine 413 bears the N6-acetyllysine; alternate mark. An N6-succinyllysine; alternate modification is found at lysine 413. Lysine 452 and lysine 470 each carry N6-acetyllysine.

This sequence belongs to the class-III pyridoxal-phosphate-dependent aminotransferase family. As to quaternary structure, homodimer; disulfide-linked. It depends on pyridoxal 5'-phosphate as a cofactor. The cofactor is [2Fe-2S] cluster. Liver &gt; pancreas &gt; brain &gt; kidney &gt; heart &gt; placenta.

The protein localises to the mitochondrion matrix. The enzyme catalyses 4-aminobutanoate + 2-oxoglutarate = succinate semialdehyde + L-glutamate. It carries out the reaction (S)-3-amino-2-methylpropanoate + 2-oxoglutarate = 2-methyl-3-oxopropanoate + L-glutamate. In terms of biological role, catalyzes the conversion of gamma-aminobutyrate and L-beta-aminoisobutyrate to succinate semialdehyde and methylmalonate semialdehyde, respectively. Can also convert delta-aminovalerate and beta-alanine. This is 4-aminobutyrate aminotransferase, mitochondrial from Homo sapiens (Human).